The primary structure comprises 368 residues: CCA-adding enzyme (368 aa).

ATP contacts are provided by G8 and R11. Residues G8 and R11 each coordinate CTP. Mg(2+)-binding residues include D21 and D23. Positions 91, 137, and 140 each coordinate ATP. R91, R137, and R140 together coordinate CTP.

It belongs to the tRNA nucleotidyltransferase/poly(A) polymerase family. Bacterial CCA-adding enzyme type 2 subfamily. It depends on Mg(2+) as a cofactor.

The catalysed reaction is a tRNA precursor + 2 CTP + ATP = a tRNA with a 3' CCA end + 3 diphosphate. The enzyme catalyses a tRNA with a 3' CCA end + 2 CTP + ATP = a tRNA with a 3' CCACCA end + 3 diphosphate. Functionally, catalyzes the addition and repair of the essential 3'-terminal CCA sequence in tRNAs without using a nucleic acid template. Adds these three nucleotides in the order of C, C, and A to the tRNA nucleotide-73, using CTP and ATP as substrates and producing inorganic pyrophosphate. tRNA 3'-terminal CCA addition is required both for tRNA processing and repair. Also involved in tRNA surveillance by mediating tandem CCA addition to generate a CCACCA at the 3' terminus of unstable tRNAs. While stable tRNAs receive only 3'-terminal CCA, unstable tRNAs are marked with CCACCA and rapidly degraded. In Pseudomonas putida (strain ATCC 700007 / DSM 6899 / JCM 31910 / BCRC 17059 / LMG 24140 / F1), this protein is CCA-adding enzyme.